The following is a 340-amino-acid chain: 3-hydroxybenzoate synthase (340 aa).

Positions 147, 154, 207, and 220 each coordinate substrate. The active-site Proton acceptor is the E334.

It belongs to the FkbO/Hyg5 family. In terms of assembly, trimer.

It catalyses the reaction chorismate = 3-hydroxybenzoate + pyruvate. In terms of biological role, involved in the biosynthesis of BC325, a rapamycin analog containing a 3-hydroxybenzoate starter unit. Catalyzes the hydrolysis of chorismate via an intramolecular mechanism to yield 3-hydroxybenzoate (3HBA). The chain is 3-hydroxybenzoate synthase from Streptomyces hygroscopicus.